Here is a 428-residue protein sequence, read N- to C-terminus: MSEFEPIRGMKDYYGEELNKIKFIEETFRTVVLNSGYQEVYTPIVEDFKLFSLKSGEEIRKTMYVFKDKADREVALRPEITPSIVRVYLNSMQHLPKPLRLFYVGQVYRYDEPQFGRYREFRQAGVELLGSSSSFADIEVISLLNEIYDSLGLKDKIIIKINNIGIYREIFNKAGITEEQQEHLLHLIDKGKVDDALKEFTDNNYKDLITYLISLKFDKLESDKLESLRREVSKYNFNLEGEINKLSFISEVLEDLGVKIKIDLGFVRGLAYYTGVIFEVIHPDVSFSIAGGGRYDNLVRLYGGADTPAIGFAIGVERTALVINKIKSDLQRKKIAVIPLISTKDSLSLAIRLLNILRKNNIIGVLNLKDVPLSKLMTYYVEEGYNAIVLIGKKELEENSITIKFLEKREQKTVKLEKIEDVLINNLS.

This sequence belongs to the class-II aminoacyl-tRNA synthetase family.

Its subcellular location is the cytoplasm. The catalysed reaction is tRNA(His) + L-histidine + ATP = L-histidyl-tRNA(His) + AMP + diphosphate + H(+). In Sulfolobus acidocaldarius (strain ATCC 33909 / DSM 639 / JCM 8929 / NBRC 15157 / NCIMB 11770), this protein is Histidine--tRNA ligase.